Consider the following 380-residue polypeptide: E3 ubiquitin-protein ligase Iruka (380 aa).

A disordered region spans residues 50-92 (APEMDSSTAGASGSARSGSSGSGSSGSHDTLSRGSSSSGSQVN). Low complexity-rich tracts occupy residues 55–68 (SSTA…RSGS) and 74–89 (SGSH…SSGS). The segment at 253–294 (CSICWDDFKIDETVRKLPCSHLYHENCIVPWLNLHSTCPICR) adopts an RING-type; atypical zinc-finger fold. The interval 317-367 (EMAADGSNSERRSASTATGTDNPSPANNPSQAAAEGGRTRPDANPAQAARN) is disordered. The segment covering 338–350 (NPSPANNPSQAAA) has biased composition (low complexity).

Interacts (via N-terminus) with CG7546 (via Ubl domain).

It catalyses the reaction S-ubiquitinyl-[E2 ubiquitin-conjugating enzyme]-L-cysteine + [acceptor protein]-L-lysine = [E2 ubiquitin-conjugating enzyme]-L-cysteine + N(6)-ubiquitinyl-[acceptor protein]-L-lysine.. It participates in protein modification; protein ubiquitination. Its function is as follows. E3 ubiquitin-protein ligase that mediates E2-dependent, 'Lys-48'- and/or 'Lys-63'-linked polyubiquitination of substrates. Recognizes miRNA-empty Ago1 and triggers its degradation via polyubiquitination independently of the Bag6 complex. By targeting miRNA-empty Ago1, eliminates dysfunctional Ago1 not able to bind miRNA and thereby plays a role in the quality control of miRNA-mediated silencing. In Drosophila melanogaster (Fruit fly), this protein is E3 ubiquitin-protein ligase Iruka.